The following is a 34-amino-acid chain: Photosystem II reaction center protein M (34 aa).

Residues 7-27 (GFVASLLFILVPAIFLIVLYI) form a helical membrane-spanning segment.

This sequence belongs to the PsbM family. PSII is composed of 1 copy each of membrane proteins PsbA, PsbB, PsbC, PsbD, PsbE, PsbF, PsbH, PsbI, PsbJ, PsbK, PsbL, PsbM, PsbT, PsbX, PsbY, PsbZ, Psb30/Ycf12, peripheral proteins PsbO, CyanoQ (PsbQ), PsbU, PsbV and a large number of cofactors. It forms dimeric complexes.

It localises to the cellular thylakoid membrane. Functionally, one of the components of the core complex of photosystem II (PSII). PSII is a light-driven water:plastoquinone oxidoreductase that uses light energy to abstract electrons from H(2)O, generating O(2) and a proton gradient subsequently used for ATP formation. It consists of a core antenna complex that captures photons, and an electron transfer chain that converts photonic excitation into a charge separation. This subunit is found at the monomer-monomer interface. In Parasynechococcus marenigrum (strain WH8102), this protein is Photosystem II reaction center protein M.